The primary structure comprises 630 residues: Chaperone protein DnaK (630 aa).

Phosphothreonine; by autocatalysis is present on threonine 198. The segment at 604–630 (AAAAPGEEAPKDDDVVDAEFSEVDDKK) is disordered. Acidic residues predominate over residues 617 to 630 (DVVDAEFSEVDDKK).

It belongs to the heat shock protein 70 family.

In terms of biological role, acts as a chaperone. The protein is Chaperone protein DnaK of Rhizorhabdus wittichii (strain DSM 6014 / CCUG 31198 / JCM 15750 / NBRC 105917 / EY 4224 / RW1) (Sphingomonas wittichii).